Here is a 424-residue protein sequence, read N- to C-terminus: Protein FAM43A (424 aa).

A compositionally biased stretch (acidic residues) spans 261–297 (QQEEELQEEEEEHLEDCLEEEEEEDGVGDGDPAEEEA). Disordered stretches follow at residues 261–299 (QQEE…EAEA) and 382–424 (LLSG…PYSG). Low complexity predominate over residues 382-394 (LLSGESTGSESSI). Positions 405–418 (SPGNPSGPADSTSL) are enriched in polar residues.

This sequence belongs to the FAM43 family.

The chain is Protein FAM43A (Fam43a) from Mus musculus (Mouse).